Reading from the N-terminus, the 198-residue chain is MQAEIKADIIVEAMEVLVNHILYVRGIYPSHIFKMKRMYNSPIYVSIFPPLNNYLAGVLKSAQELLRRRELQCLELIVYQKENEKLESYKMQLETQRSGLPAEDHLMEFEQNMRSVIYKISQRLNQAPKLPAGSCQFKVHLHTTQEAFIRFSHDSQYQEFPWLQTQKTESQATGRTVYLLPLARVDDLGLKMDVLIVN.

One can recognise an HORMA domain in the interval E4–I196.

This sequence belongs to the MAD2 family. In terms of assembly, accessory subunit of the zeta DNA polymerase complex, which consists of the catalytic component PolZ1/DNApol-zeta and PolZ2/Rev7. Interacts with the apurinic/apyrimidinic (AP) endonuclease Rrp1 (via the N-terminus).

Functionally, as the accessory component of the DNA polymerase zeta complex, involved in translesion DNA synthesis (TLS) and various DNA repair mechanisms. Promotes the apurinic/apyrimidinic (AP) endonuclease activity of Rrp1 and is therefore likely to be involved in the base excision repair (BER) pathway responsible for repair of DNA lesions. It does not appear to influence the synthesis activity of the catalytic component Dmpol-zeta. This is DNA polymerase zeta subunit 2 from Drosophila melanogaster (Fruit fly).